An 88-amino-acid chain; its full sequence is Small ribosomal subunit protein bS20 (88 aa).

The tract at residues 1-22 is disordered; sequence MANTPSAKKAVNKIAKRTQVNK.

It belongs to the bacterial ribosomal protein bS20 family.

Its function is as follows. Binds directly to 16S ribosomal RNA. The protein is Small ribosomal subunit protein bS20 of Bartonella bacilliformis (strain ATCC 35685 / KC583 / Herrer 020/F12,63).